Here is a 352-residue protein sequence, read N- to C-terminus: (2E,6E)-farnesyl diphosphate synthase (352 aa).

Isopentenyl diphosphate is bound by residues K43, R46, and H77. Mg(2+) is bound by residues D84 and D88. Residues 84–88 (DDLID) carry the DDXXD motif motif. An isopentenyl diphosphate-binding site is contributed by R94. Residues 236-240 (DDVLG) carry the DDXXD motif motif.

It belongs to the FPP/GGPP synthase family. It depends on Mg(2+) as a cofactor.

It catalyses the reaction isopentenyl diphosphate + dimethylallyl diphosphate = (2E)-geranyl diphosphate + diphosphate. It carries out the reaction isopentenyl diphosphate + (2E)-geranyl diphosphate = (2E,6E)-farnesyl diphosphate + diphosphate. Its pathway is isoprenoid biosynthesis; geranyl diphosphate biosynthesis; geranyl diphosphate from dimethylallyl diphosphate and isopentenyl diphosphate: step 1/1. It functions in the pathway isoprenoid biosynthesis; farnesyl diphosphate biosynthesis; farnesyl diphosphate from geranyl diphosphate and isopentenyl diphosphate. In terms of biological role, catalyzes the sequential condensations of isopentenyl pyrophosphate (IPP) with dimethylallyl diphosphate (DMAPP) to yield geranyl diphosphate (GPP) and with GPP to yield (2E,6E)-farnesyl diphosphate (E,E-FPP). The chain is (2E,6E)-farnesyl diphosphate synthase from Mycobacterium tuberculosis (strain ATCC 25618 / H37Rv).